Reading from the N-terminus, the 483-residue chain is Probable ATP-dependent RNA helicase DDX49 (483 aa).

The short motif at 2 to 30 (AGFAELGLSSWLVEQCRQLGLKQPTPVQL) is the Q motif element. Residues 33 to 207 (IPAILEGRDC…GLATNQPFFW (175 aa)) enclose the Helicase ATP-binding domain. An ATP-binding site is contributed by 46–53 (AKTGSGKT). Positions 152–155 (DEAD) match the DEAD box motif. Positions 218-382 (QLDQRYLLVP…EFSVEEAEVL (165 aa)) constitute a Helicase C-terminal domain. A disordered region spans residues 444–483 (KEKVEETLKRQKAGRAGHKGRPPRTPSGSHSGPVPSQGLV). The segment covering 453 to 465 (RQKAGRAGHKGRP) has biased composition (basic residues).

This sequence belongs to the DEAD box helicase family. DDX49/DBP8 subfamily.

It localises to the nucleus. Its subcellular location is the nucleolus. The catalysed reaction is ATP + H2O = ADP + phosphate + H(+). In terms of biological role, ATP-dependent RNA helicase that plays a role in various aspects of RNA metabolism including the regulation of mRNA export and the levels of pre-ribosomal RNA. Regulates the stability and synthesis of pre-ribosomal RNA and thereby regulates cell proliferation. Also possesses antiviral activity by recognizing gammaherpesvirus transcripts in the context of lytic reactivation. This chain is Probable ATP-dependent RNA helicase DDX49 (DDX49), found in Homo sapiens (Human).